A 441-amino-acid chain; its full sequence is FBD-associated F-box protein At5g18780 (441 aa).

The 47-residue stretch at 10-56 (EDRISILPEPLLCHILSFLRTKDSVRTSVLSSRWRDLWLWVPRLDLD) folds into the F-box domain. In terms of domain architecture, FBD spans 366–410 (LPRCLISSLASVDIESPITDKATELKLVSYLLENSTTLKKLVLRL).

The sequence is that of FBD-associated F-box protein At5g18780 from Arabidopsis thaliana (Mouse-ear cress).